The chain runs to 435 residues: Adenylosuccinate synthetase (435 aa).

Residues 11–17 and 39–41 contribute to the GTP site; these read GDEGKGK and GHT. The active-site Proton acceptor is aspartate 12. Residues aspartate 12 and glycine 39 each contribute to the Mg(2+) site. IMP is bound by residues 12-15, 37-40, threonine 134, arginine 148, asparagine 230, threonine 245, and arginine 309; these read DEGK and NAGH. Histidine 40 (proton donor) is an active-site residue. Substrate is bound at residue 305 to 311; sequence VTTGRKR. GTP contacts are provided by residues arginine 311, 337-339, and 419-421; these read KLD and GTG.

The protein belongs to the adenylosuccinate synthetase family. In terms of assembly, homodimer. Requires Mg(2+) as cofactor.

The protein localises to the cytoplasm. It carries out the reaction IMP + L-aspartate + GTP = N(6)-(1,2-dicarboxyethyl)-AMP + GDP + phosphate + 2 H(+). Its pathway is purine metabolism; AMP biosynthesis via de novo pathway; AMP from IMP: step 1/2. Its function is as follows. Plays an important role in the de novo pathway and in the salvage pathway of purine nucleotide biosynthesis. Catalyzes the first committed step in the biosynthesis of AMP from IMP. The protein is Adenylosuccinate synthetase of Zygosaccharomyces rouxii (strain ATCC 2623 / CBS 732 / NBRC 1130 / NCYC 568 / NRRL Y-229).